The following is a 417-amino-acid chain: Cobalamin binding intrinsic factor (417 aa).

A signal peptide spans 1–22 (MAWFSLHLLHLLWAAAGTSTWA). 3 disulfides stabilise this stretch: cysteine 26–cysteine 246, cysteine 103–cysteine 288, and cysteine 143–cysteine 182. Asparagine 100 carries an N-linked (GlcNAc...) asparagine glycan. Aspartate 171 is a cob(II)alamin binding site. Serine 191 is subject to Phosphoserine. Residue asparagine 209 is glycosylated (N-linked (GlcNAc...) asparagine). Cob(II)alamin contacts are provided by aspartate 222 and glutamine 270. Residues asparagine 311 and asparagine 330 are each glycosylated (N-linked (GlcNAc...) asparagine). Residues 365 to 370 (SWGLVV) and 386 to 395 (WQFLSGKTPL) contribute to the cob(II)alamin site. The N-linked (GlcNAc...) asparagine glycan is linked to asparagine 413.

The protein belongs to the eukaryotic cobalamin transport proteins family. In terms of assembly, interacts with CUBN (via CUB domains).

The protein localises to the secreted. Its function is as follows. Promotes absorption of the essential vitamin cobalamin (Cbl) in the ileum. After interaction with CUBN, the CBLIF-cobalamin complex is internalized via receptor-mediated endocytosis. This is Cobalamin binding intrinsic factor (CBLIF) from Canis lupus familiaris (Dog).